A 187-amino-acid polypeptide reads, in one-letter code: Large ribosomal subunit protein uL22A (187 aa).

This sequence belongs to the universal ribosomal protein uL22 family. In terms of assembly, component of the large ribosomal subunit (LSU). Mature yeast ribosomes consist of a small (40S) and a large (60S) subunit. The 40S small subunit contains 1 molecule of ribosomal RNA (18S rRNA) and at least 33 different proteins. The large 60S subunit contains 3 rRNA molecules (25S, 5.8S and 5S rRNA) and at least 46 different proteins. uL22 is associated with the polypeptide exit tunnel.

The protein resides in the cytoplasm. Its function is as follows. Component of the ribosome, a large ribonucleoprotein complex responsible for the synthesis of proteins in the cell. The small ribosomal subunit (SSU) binds messenger RNAs (mRNAs) and translates the encoded message by selecting cognate aminoacyl-transfer RNA (tRNA) molecules. The large subunit (LSU) contains the ribosomal catalytic site termed the peptidyl transferase center (PTC), which catalyzes the formation of peptide bonds, thereby polymerizing the amino acids delivered by tRNAs into a polypeptide chain. The nascent polypeptides leave the ribosome through a tunnel in the LSU and interact with protein factors that function in enzymatic processing, targeting, and the membrane insertion of nascent chains at the exit of the ribosomal tunnel. This Schizosaccharomyces pombe (strain 972 / ATCC 24843) (Fission yeast) protein is Large ribosomal subunit protein uL22A (rpl1701).